We begin with the raw amino-acid sequence, 764 residues long: ATP-dependent DNA helicase DDM1 (764 aa).

The disordered stretch occupies residues 1-42 (MVSLRSRKVIPASEMVSDGKTEKDASGDSPTSVLNEEENCEE). Over residues 17-26 (SDGKTEKDAS) the composition is skewed to basic and acidic residues. Residues 62–88 (LISEAMAQEEEQLLKLREDEEKANNAG) adopt a coiled-coil conformation. Residues 129 to 152 (IESESQKAEPEKTGRGRKRKAASQ) form a disordered region. Over residues 132-142 (ESQKAEPEKTG) the composition is skewed to basic and acidic residues. Positions 145-152 (RKRKAASQ) match the Nuclear localization signal 1 motif. A Helicase ATP-binding domain is found at 214 to 382 (ISLWQNGLNG…WSLLNFILPD (169 aa)). 227-234 (DQMGLGKT) contacts ATP. The short motif at 333 to 336 (DEGH) is the DEAH box element. Residues 429 to 436 (LRRMKCDV) carry the Nuclear localization signal 2 motif. Positions 528-695 (LLERLLVRLF…STPLEEEDIL (168 aa)) constitute a Helicase C-terminal domain.

This sequence belongs to the SNF2/RAD54 helicase family. As to quaternary structure, interacts with the MBD domains of MBD2, MBD5 and MBD6.

The protein resides in the nucleus. It carries out the reaction ATP + H2O = ADP + phosphate + H(+). With respect to regulation, ATPase activity is stimulated 3-fold by DNA (both free and nucleosomal) binding. Functionally, ATP-dependent DNA helicase that plays a role in formation, organization, stability and heritability of heterochromatin and thus regulates several physiological traits. Binds to the nucleosome and promotes chromatin remodeling in an ATP-dependent manner; induces nucleosome repositioning on a short DNA fragment, and, possibly, could be guided to target sites (including silent transposable elements) by small interfering RNAs (siRNAs). Can bind both free and nucleosomal DNA. Required for the heritable maintenance of genome integrity and transcriptional gene silencing (TGS), including homology-dependent gene silencing (HDG silencing), via the maintenance of DNA methylation (mostly on cytosine, in both CpG and CpHpG sites, where H is A, T or C) and of histone methylation (e.g. chromatin methylation). May facilitate localization of MBD proteins at specific nuclear domains. Necessary for the maintenance of the genomic imprint at the MEA locus, especially for the silencing of paternally inherited MEA locus. Plays a major role in the inactivation maintenance of retrotransposons (e.g. Tar17, SINE, LINE, ATLN39, CAC1 (CACTAs), Athila elements, and mutator-like elements MULEs and TIR-MULEs) and the silencing of repeated genes and transgenes (e.g. T-DNA insertions). Required for KYP-dependent histone H3 'Lys-9' (H3K9me) methylation, deacetylation of histone H4 'Lys-16' (H4K16) and MET1-dependent DNA methylation. Involved in the chromatin organization of 5S rRNA genes (localized in the pericentromeric heterochromatin of chromosomes 3, 4, and 5) modifications during heterochromatin establishment. Prevents siRNA accumulation (siRNA are probably involved in epigenetic inheritance and in 5S rRNA genes regulation by silencing). Required during plant organogenesis and development, as well as during seed formation. In Arabidopsis thaliana (Mouse-ear cress), this protein is ATP-dependent DNA helicase DDM1 (DDM1).